Consider the following 784-residue polypeptide: Transcription factor Sp1 (784 aa).

The interval methionine 1–leucine 95 is disordered. Residue serine 2 is modified to N-acetylserine. Phosphoserine is present on residues serine 2 and serine 7. The repressor domain stretch occupies residues serine 2–glutamine 84. Lysine 16 is covalently cross-linked (Glycyl lysine isopeptide (Lys-Gly) (interchain with G-Cter in SUMO); alternate). Lysine 16 participates in a covalent cross-link: Glycyl lysine isopeptide (Lys-Gly) (interchain with G-Cter in SUMO2); alternate. Over residues glycine 23 to alanine 34 the composition is skewed to gly residues. The segment covering serine 37–serine 49 has biased composition (low complexity). A Phosphoserine modification is found at serine 61. Over residues glutamate 74–serine 87 the composition is skewed to low complexity. Serine 103 is subject to Phosphoserine; by ATM. Polar residues predominate over residues isoleucine 111–glutamine 125. A disordered region spans residues isoleucine 111–valine 144. Positions serine 126–serine 138 are enriched in low complexity. Positions glutamine 148–glutamine 253 are transactivation domain A (Gln-rich). Residues asparagine 263–threonine 497 are transactivation domain B (Gln-rich). At threonine 280 the chain carries Phosphothreonine; by MAPK8. 2 disordered regions span residues serine 282 to serine 303 and threonine 333 to glutamine 398. Composition is skewed to low complexity over residues threonine 344–threonine 357 and glutamine 373–glutamine 398. Residue threonine 455 is modified to Phosphothreonine; by MAPK1 and MAPK3. Residues valine 464 to glutamine 472 carry the 9aaTAD motif. O-linked (GlcNAc) serine glycosylation is present at serine 493. The interval serine 498 to lysine 611 is transactivation domain C (highly charged). The interval glutamine 566–arginine 598 is disordered. The residue at position 613 (serine 613) is a Phosphoserine; alternate. Serine 613 carries an O-linked (GlcNAc) serine; alternate glycan. Positions aspartate 620 to phenylalanine 784 are VZV IE62-binding. 3 consecutive C2H2-type zinc fingers follow at residues histidine 627–proline 656, phenylalanine 657–lysine 686, and phenylalanine 687–glycine 714. At threonine 641 the chain carries Phosphothreonine; alternate. Threonine 641 carries O-linked (GlcNAc) threonine; alternate glycosylation. An O-linked (GlcNAc) serine; alternate glycan is attached at serine 642. At serine 642 the chain carries Phosphoserine; by PKC/PRKCZ; alternate. At threonine 652 the chain carries Phosphothreonine; by PKC/PRKCZ. At threonine 669 the chain carries Phosphothreonine. Serine 671 carries the phosphoserine; by PKC/PRKCZ modification. At threonine 682 the chain carries Phosphothreonine; by PKC/PRKCZ. Phosphoserine; alternate is present on residues serine 699 and serine 703. O-linked (GlcNAc) serine; alternate glycosylation is found at serine 699 and serine 703. Lysine 704 is modified (N6-acetyllysine). The interval histidine 709–phenylalanine 784 is domain D. Threonine 738 carries the post-translational modification Phosphothreonine; by MAPK1, MAPK3 and MAPK8.

Belongs to the Sp1 C2H2-type zinc-finger protein family. In terms of assembly, interacts with ATF7IP, ATF7IP2, BAHD1, POGZ, HCFC1, AATF and PHC2. Interacts with SV40 VP2/3 proteins. Interacts with SV40 major capsid protein VP1; this interaction leads to a cooperativity between the 2 proteins in DNA binding. Interacts with HLTF; the interaction may be required for basal transcriptional activity of HLTF. Interacts (deacetylated form) with EP300; the interaction enhances gene expression. Interacts with HDAC1 and JUN. Interacts with ELF1; the interaction is inhibited by glycosylation of SP1. Interaction with NFYA; the interaction is inhibited by glycosylation of SP1. Interacts with SMARCA4/BRG1. Interacts with ATF7IP and TBP. Interacts with MEIS2 isoform 4 and PBX1 isoform PBX1a. Interacts with EGR1. Interacts with RNF112 in an oxidative stress-regulated manner. Interacts with ZBTB7A; ZBTB7A prevents the binding to GC-rich motifs in promoters and represses the transcriptional activity of SP1. Interacts with DDX3X; this interaction potentiates SP1-induced CDKN1A/WAF1/CIP1 transcription. Interacts with MSX1; the interaction may inhibit MSX1 autoinactivation. Interacts with MSX3. (Microbial infection) Interacts with murine minute virus NS1; this interaction allows high levels of viral P38 promoter transactivation by NS1. In terms of processing, phosphorylated on multiple serine and threonine residues. Phosphorylation is coupled to ubiquitination, sumoylation and proteolytic processing. Phosphorylation on Ser-61 enhances proteolytic cleavage. Phosphorylation on Ser-7 enhances ubiquitination and protein degradation. Hyperphosphorylation on Ser-103 in response to DNA damage has no effect on transcriptional activity. MAPK1/MAPK3-mediated phosphorylation on Thr-455 and Thr-738 enhances VEGF transcription but, represses FGF2-triggered PDGFR-alpha transcription. Also implicated in the repression of RECK by ERBB2. Hyperphosphorylated on Thr-280 and Thr-738 during mitosis by MAPK8 shielding SP1 from degradation by the ubiquitin-dependent pathway. Phosphorylated in the zinc-finger domain by calmodulin-activated PKCzeta. Phosphorylation on Ser-642 by PKCzeta is critical for TSA-activated LHR gene expression through release of its repressor, p107. Phosphorylation on Thr-669, Ser-671 and Thr-682 is stimulated by angiotensin II via the AT1 receptor inducing increased binding to the PDGF-D promoter. This phosphorylation is increased in injured artey wall. Ser-61 and Thr-682 can both be dephosphorylated by PP2A during cell-cycle interphase. Dephosphorylation on Ser-61 leads to increased chromatin association during interphase and increases the transcriptional activity. On insulin stimulation, sequentially glycosylated and phosphorylated on several C-terminal serine and threonine residues. Post-translationally, acetylated. Acetylation/deacetylation events affect transcriptional activity. Deacetylation leads to an increase in the expression of the 12(s)-lipooxygenase gene through recruitment of p300 to the promoter. Deacetylated by HDAC6 which leads to increased expression of ENG and positive regulation of angiogenesis. Ubiquitinated. Ubiquitination occurs on the C-terminal proteolytically-cleaved peptide and is triggered by phosphorylation. In terms of processing, sumoylated with SUMO1. Sumoylation modulates proteolytic cleavage of the N-terminal repressor domain. Sumoylation levels are attenuated during tumorigenesis. Phosphorylation mediates SP1 desumoylation. Post-translationally, proteolytic cleavage in the N-terminal repressor domain is prevented by sumoylation. The C-terminal cleaved product is susceptible to degradation. O-glycosylated; Contains 8 N-acetylglucosamine side chains. Levels are controlled by insulin and the SP1 phosphorylation states. Insulin-mediated O-glycosylation locates SP1 to the nucleus, where it is sequentially deglycosylated and phosphorylated. O-glycosylation affects transcriptional activity through disrupting the interaction with a number of transcription factors including ELF1 and NFYA. Inhibited by peroxisomome proliferator receptor gamma (PPARgamma).

It localises to the nucleus. Its subcellular location is the cytoplasm. Transcription factor that can activate or repress transcription in response to physiological and pathological stimuli. Binds with high affinity to GC-rich motifs and regulates the expression of a large number of genes involved in a variety of processes such as cell growth, apoptosis, differentiation and immune responses. Highly regulated by post-translational modifications (phosphorylations, sumoylation, proteolytic cleavage, glycosylation and acetylation). Also binds the PDGFR-alpha G-box promoter. May have a role in modulating the cellular response to DNA damage. Implicated in chromatin remodeling. Plays a role in the recruitment of SMARCA4/BRG1 on the c-FOS promoter Plays an essential role in the regulation of FE65 gene expression. Positively regulates the transcription of the core clock component BMAL1. Plays a role in protecting cells against oxidative stress following brain injury by regulating the expression of RNF112. The sequence is that of Transcription factor Sp1 (Sp1) from Mus musculus (Mouse).